A 444-amino-acid polypeptide reads, in one-letter code: Xylose isomerase (444 aa).

Mg(2+) is bound by residues D307 and D309.

This sequence belongs to the xylose isomerase family. As to quaternary structure, homotetramer. Mg(2+) is required as a cofactor.

It is found in the cytoplasm. It catalyses the reaction alpha-D-xylose = alpha-D-xylulofuranose. The chain is Xylose isomerase from Thermotoga neapolitana (strain ATCC 49049 / DSM 4359 / NBRC 107923 / NS-E).